The following is a 92-amino-acid chain: MATEQTILVGKKPTTNYVIATVMAFNAGVKKVVLKARGAAISKAVSTAVMVRDRFLPGKVQIKDIKLLSDKVQGQGGRERTVAAIEVVLEMA.

The residue at position 11 (Lys-11) is an N6-acetyllysine.

Belongs to the histone-like Alba family. Post-translationally, acetylated. Acetylation at Lys-11 decreases DNA-binding affinity.

Its subcellular location is the cytoplasm. It localises to the chromosome. In terms of biological role, binds double-stranded DNA tightly but without sequence specificity. Involved in DNA compaction. This Pyrobaculum aerophilum (strain ATCC 51768 / DSM 7523 / JCM 9630 / CIP 104966 / NBRC 100827 / IM2) protein is DNA/RNA-binding protein Alba.